The primary structure comprises 122 residues: Co-chaperonin GroES (122 aa).

This sequence belongs to the GroES chaperonin family. In terms of assembly, heptamer of 7 subunits arranged in a ring. Interacts with the chaperonin GroEL.

The protein localises to the cytoplasm. In terms of biological role, together with the chaperonin GroEL, plays an essential role in assisting protein folding. The GroEL-GroES system forms a nano-cage that allows encapsulation of the non-native substrate proteins and provides a physical environment optimized to promote and accelerate protein folding. GroES binds to the apical surface of the GroEL ring, thereby capping the opening of the GroEL channel. This is Co-chaperonin GroES from Aquifex aeolicus (strain VF5).